Here is a 366-residue protein sequence, read N- to C-terminus: Peptide chain release factor 2 (366 aa).

Q246 carries the post-translational modification N5-methylglutamine.

The protein belongs to the prokaryotic/mitochondrial release factor family. Post-translationally, methylated by PrmC. Methylation increases the termination efficiency of RF2.

The protein localises to the cytoplasm. Its function is as follows. Peptide chain release factor 2 directs the termination of translation in response to the peptide chain termination codons UGA and UAA. In Frankia casuarinae (strain DSM 45818 / CECT 9043 / HFP020203 / CcI3), this protein is Peptide chain release factor 2.